We begin with the raw amino-acid sequence, 60 residues long: UPF0434 protein Aave_2563 (60 aa).

Belongs to the UPF0434 family.

The protein is UPF0434 protein Aave_2563 of Paracidovorax citrulli (strain AAC00-1) (Acidovorax citrulli).